A 1004-amino-acid polypeptide reads, in one-letter code: Centriolar coiled-coil protein of 110 kDa (1004 aa).

A CEP97 binding region spans residues 1-221; the sequence is MEEYEEFCEK…SCLAEVTPDP (221 aa). Positions 51–90 form a coiled coil; it reads EKRKKIQEEKQKALDVQSRKQANRKKALLTRVQEILENVQ. Positions 64-82 are calmodulin-binding; sequence LDVQSRKQANRKKALLTRV. Residues 67–82 form a required for interaction with CEP290 region; the sequence is QSRKQANRKKALLTRV. 2 disordered regions span residues 147–194 and 239–279; these read PVNN…SSAS and RELS…APPM. Phosphoserine is present on Ser170. Positions 243–252 are enriched in low complexity; it reads SRSLRNSLKR. A compositionally biased stretch (basic and acidic residues) spans 253-276; that stretch reads SVNETHSDRENDAAKASDCVKEKA. An interaction with CEP76 region spans residues 349–564; sequence ENKVKSLKGP…QTQTSRQQMD (216 aa). Ser364, Ser370, and Ser398 each carry phosphoserine. A disordered region spans residues 401–433; that stretch reads GKEEAVDRTAPAAAETTNESETVPKSPTDLTGV. Polar residues predominate over residues 415-433; it reads ETTNESETVPKSPTDLTGV. Ser550 bears the Phosphoserine mark. The stretch at 641-699 forms a coiled coil; that stretch reads QELLKSKMLAFEEMRKRLEEQHAQQLSLLIAEQEREQEQLQKEIEEQEKMLKEKAVTTD. Calmodulin-binding regions lie at residues 773-813 and 901-916; these read GRAQ…DKLK and VALSVATQKSLDRKKF. The segment at 955–1004 is disordered; that stretch reads LSRQGTPKTSVKGVVQNRQKPSQSRVPNRAPVSGAYAGKTQRKRPNVATI. Residues 970-980 show a composition bias toward polar residues; it reads QNRQKPSQSRV. A compositionally biased stretch (basic residues) spans 994–1004; that stretch reads TQRKRPNVATI.

In terms of assembly, interacts with CALM1, CETN2, CEP76, CEP104, CEP290 and TALPID3. Interacts with CEP97. Seems to associate with discrete CETN2, CEP97 and CEP290-containing complexes. Interacts with NEURL4 and CCNF; these interactions are not mutually exclusive and both lead to CCP110 ubiquitination and proteasome-dependent degradation. Via its interaction with NEURL4, may indirectly interact with HERC2. Interacts with KIF24, leading to its recruitment to centrioles. Interacts with USP20 and USP33. Interacts with MPHOSPH9. Interacts (via N-terminal region) with ENKD1 (via central region); ENKD1 competes with CEP97 for binding to CCP110, destabilizing the interaction between CP110 and CEP97 which promotes the removal of CCP110 and CEP97 from the mother centriole and allows the initiation of ciliogenesis. In terms of processing, phosphorylated by CDKs. Post-translationally, ubiquitinated by the SCF(CCNF) during G2 phase, leading to its degradation by the proteasome and preventing centrosome reduplication. Deubiquitinated by USP33 in S and G2/M phase, leading to stabilize CCP110 during the period which centrioles duplicate and elongate. Ubiquitinated by the EDVP complex, leading to its degradation.

Its subcellular location is the cytoplasm. The protein resides in the cytoskeleton. It is found in the microtubule organizing center. It localises to the centrosome. The protein localises to the centriole. Its subcellular location is the cilium basal body. Necessary for centrosome duplication at different stages of procentriole formation. Acts as a key negative regulator of ciliogenesis in collaboration with CEP97 by capping the mother centriole thereby preventing cilia formation. Also involved in promoting ciliogenesis. May play a role in the assembly of the mother centriole subdistal appendages (SDA) thereby effecting the fusion of recycling endosomes to basal bodies during cilia formation. Required for correct spindle formation and has a role in regulating cytokinesis and genome stability via cooperation with CALM1 and CETN2. The chain is Centriolar coiled-coil protein of 110 kDa (Ccp110) from Mus musculus (Mouse).